Consider the following 396-residue polypeptide: NADH-quinone oxidoreductase subunit D (396 aa).

The protein belongs to the complex I 49 kDa subunit family. As to quaternary structure, NDH-1 is composed of 14 different subunits. Subunits NuoB, C, D, E, F, and G constitute the peripheral sector of the complex.

It localises to the cell inner membrane. The catalysed reaction is a quinone + NADH + 5 H(+)(in) = a quinol + NAD(+) + 4 H(+)(out). In terms of biological role, NDH-1 shuttles electrons from NADH, via FMN and iron-sulfur (Fe-S) centers, to quinones in the respiratory chain. The immediate electron acceptor for the enzyme in this species is believed to be ubiquinone. Couples the redox reaction to proton translocation (for every two electrons transferred, four hydrogen ions are translocated across the cytoplasmic membrane), and thus conserves the redox energy in a proton gradient. The chain is NADH-quinone oxidoreductase subunit D from Rhodopseudomonas palustris (strain BisB18).